Consider the following 380-residue polypeptide: Cytochrome b (380 aa).

The next 4 helical transmembrane spans lie at 33–53 (FGSL…FLAM), 77–98 (WLIR…YLHV), 113–133 (WNIG…GYVL), and 178–198 (FFAF…IHLL). 2 residues coordinate heme b: His-83 and His-97. The heme b site is built by His-182 and His-196. His-201 lines the a ubiquinone pocket. Transmembrane regions (helical) follow at residues 226–246 (YKDM…TLFT), 288–308 (LGGV…PILH), 320–340 (ITQM…WIGG), and 347–367 (FMTI…ILIP).

It belongs to the cytochrome b family. The cytochrome bc1 complex contains 3 respiratory subunits (MT-CYB, CYC1 and UQCRFS1), 2 core proteins (UQCRC1 and UQCRC2) and probably 6 low-molecular weight proteins. Heme b serves as cofactor.

Its subcellular location is the mitochondrion inner membrane. Its function is as follows. Component of the ubiquinol-cytochrome c reductase complex (complex III or cytochrome b-c1 complex) that is part of the mitochondrial respiratory chain. The b-c1 complex mediates electron transfer from ubiquinol to cytochrome c. Contributes to the generation of a proton gradient across the mitochondrial membrane that is then used for ATP synthesis. The chain is Cytochrome b (mt-cyb) from Latimeria chalumnae (Coelacanth).